Consider the following 472-residue polypeptide: MGRSSARDGQMPLRDIMDKKKRKNEYALERLFGRILSPFEAFLKRTTAGGIVLMGTTVLTLIAANSAWGDAFLRFWEQRVRFGIGSLQLEMSLHDLINDGLMSLFFLVVGLELKREMKVGELSSWRDAALPVFAAAGGMVVPALVYFAVNPHGTAAAGWGIPMATDIAFAVGILVLLSWRIPPGLIIFLTALAIADDLGAVLVIALFYTHEISLGAIGFASAVLFLLLLLNRGGIRHAIPYGVLGVLLWMALHHSGVHSTLAGVLLAFTIPARPARAPAEFEQRLVELQNAFHAEAAAPDFVDQPLSNPRMATIAETLERNSRAVQSPLQRMEHRLGPWVTFIVIPLFALNNVGIDFEKIALLQGLCEPVTMGVCLGLVFGKFTGISVFSWIAVRLGIGRLPSEVRWRHLLGVAWLGGIGFTMSLFISQLAFDDRLLQEQAKLGILTASLLSAMIGMTWLYFGGTRARPNPE.

Transmembrane regions (helical) follow at residues 48–68, 91–111, 129–149, 157–177, 185–205, 210–230, 237–257, 337–357, 374–394, 410–430, and 443–463; these read AGGI…NSAW, MSLH…VVGL, ALPV…YFAV, AGWG…LVLL, LIIF…LVIA, HEIS…LLLL, HAIP…HSGV, GPWV…GIDF, VCLG…WIAV, LLGV…ISQL, and LGIL…LYFG.

The protein belongs to the NhaA Na(+)/H(+) (TC 2.A.33) antiporter family.

Its subcellular location is the cell inner membrane. The catalysed reaction is Na(+)(in) + 2 H(+)(out) = Na(+)(out) + 2 H(+)(in). In terms of biological role, na(+)/H(+) antiporter that extrudes sodium in exchange for external protons. In Syntrophobacter fumaroxidans (strain DSM 10017 / MPOB), this protein is Na(+)/H(+) antiporter NhaA.